The primary structure comprises 88 residues: Large ribosomal subunit protein bL31B (88 aa).

The protein belongs to the bacterial ribosomal protein bL31 family. Type B subfamily. In terms of assembly, part of the 50S ribosomal subunit.

This Pasteurella multocida (strain Pm70) protein is Large ribosomal subunit protein bL31B.